The sequence spans 124 residues: MPFKRLIKSIDIGRAAESQAEKFARAQGFTIVERNFRCKGGEIDLIARHGEHLVFIEVRHRSSDKFGSAAESITQKKQQRIILAANIYLQKKGLTNMPCRFDVIVGNLKSNTGFQWIPDAFSCW.

This sequence belongs to the UPF0102 family.

In Hahella chejuensis (strain KCTC 2396), this protein is UPF0102 protein HCH_05895.